The primary structure comprises 709 residues: Polyribonucleotide nucleotidyltransferase (709 aa).

The Mg(2+) site is built by Asp487 and Asp493. One can recognise a KH domain in the interval 554 to 613 (PRIHTMKISSDKIKDVIGKGGAVIRALCEETGTTIEIEDDGTIKIAATEGAAAKEAIRRI). The S1 motif domain occupies 623–691 (GKIYTGKVMR…RQGRIRLSIK (69 aa)).

It belongs to the polyribonucleotide nucleotidyltransferase family. As to quaternary structure, component of the RNA degradosome, which is a multiprotein complex involved in RNA processing and mRNA degradation. The cofactor is Mg(2+).

It is found in the cytoplasm. The enzyme catalyses RNA(n+1) + phosphate = RNA(n) + a ribonucleoside 5'-diphosphate. Involved in mRNA degradation. Catalyzes the phosphorolysis of single-stranded polyribonucleotides processively in the 3'- to 5'-direction. The polypeptide is Polyribonucleotide nucleotidyltransferase (Aliivibrio fischeri (strain ATCC 700601 / ES114) (Vibrio fischeri)).